Here is a 381-residue protein sequence, read N- to C-terminus: Pentraxin-related protein PTX3 (381 aa).

The N-terminal stretch at 1 to 17 (MHLLAILFCALWSAVLA) is a signal peptide. Coiled coils occupy residues 74 to 101 (LQAT…SLAR) and 143 to 167 (EEAG…HAVQ). Cystine bridges form between Cys179-Cys357 and Cys210-Cys271. Residues 179-381 (CETAILFPMR…QPHGGAQYVS (203 aa)) enclose the Pentraxin (PTX) domain. The N-linked (GlcNAc...) asparagine glycan is linked to Asn220.

Homooctamer; disulfide-linked. Binds to C1q. In terms of assembly, (Microbial infection) Interacts with SARS coronavirus-2/SARS-CoV-2 Nucleoprotein and Spike protein homotrimer. Glycosylated.

It localises to the secreted. Functionally, plays a role in the regulation of innate resistance to pathogens, inflammatory reactions, possibly clearance of self-components and female fertility. The sequence is that of Pentraxin-related protein PTX3 from Homo sapiens (Human).